Here is a 422-residue protein sequence, read N- to C-terminus: DNA-binding transcriptional activator AdeR (422 aa).

The protein belongs to the CdaR family.

Functionally, activates ald expression in response to alanine availability and is important for normal sporulation in B.subtilis. This chain is DNA-binding transcriptional activator AdeR, found in Bacillus subtilis (strain 168).